Here is a 245-residue protein sequence, read N- to C-terminus: MRYKITIEYNGSNFIGWQRQKHLSNSIQEILEEAIFKFSRESVTTYVAGRTDAGVHALGQVAHFDLTADFDAYVVRNAINYHLIPHSISVLNVEKTDDEFHARFSAKKRHYLYKIINRYSPLTIDYNRAWLVRNPLDVEKMMRAVEYIKGNHDFSSFRARHCQSKSPVKTMDDLKIIHSDQCIDIYFSAISFLHNQVRIIVGTLVECGKNSFPPEYTKDILEAKDRSYAGMTAPPYGLYFVKVDY.

The active-site Nucleophile is the D52. Position 111 (Y111) interacts with substrate.

Belongs to the tRNA pseudouridine synthase TruA family. In terms of assembly, homodimer.

The catalysed reaction is uridine(38/39/40) in tRNA = pseudouridine(38/39/40) in tRNA. Functionally, formation of pseudouridine at positions 38, 39 and 40 in the anticodon stem and loop of transfer RNAs. This chain is tRNA pseudouridine synthase A, found in Ehrlichia canis (strain Jake).